The following is a 129-amino-acid chain: Small ribosomal subunit protein uS11 (129 aa).

The protein belongs to the universal ribosomal protein uS11 family. As to quaternary structure, part of the 30S ribosomal subunit. Interacts with proteins S7 and S18. Binds to IF-3.

In terms of biological role, located on the platform of the 30S subunit, it bridges several disparate RNA helices of the 16S rRNA. Forms part of the Shine-Dalgarno cleft in the 70S ribosome. The sequence is that of Small ribosomal subunit protein uS11 from Methylocella silvestris (strain DSM 15510 / CIP 108128 / LMG 27833 / NCIMB 13906 / BL2).